The primary structure comprises 416 residues: Serine hydroxymethyltransferase (416 aa).

Residues leucine 121 and 125 to 127 (GHL) each bind (6S)-5,6,7,8-tetrahydrofolate. N6-(pyridoxal phosphate)lysine is present on lysine 230. Residue 355-357 (SPF) coordinates (6S)-5,6,7,8-tetrahydrofolate.

It belongs to the SHMT family. As to quaternary structure, homodimer. Pyridoxal 5'-phosphate serves as cofactor.

It is found in the cytoplasm. The enzyme catalyses (6R)-5,10-methylene-5,6,7,8-tetrahydrofolate + glycine + H2O = (6S)-5,6,7,8-tetrahydrofolate + L-serine. Its pathway is one-carbon metabolism; tetrahydrofolate interconversion. The protein operates within amino-acid biosynthesis; glycine biosynthesis; glycine from L-serine: step 1/1. In terms of biological role, catalyzes the reversible interconversion of serine and glycine with tetrahydrofolate (THF) serving as the one-carbon carrier. This reaction serves as the major source of one-carbon groups required for the biosynthesis of purines, thymidylate, methionine, and other important biomolecules. Also exhibits THF-independent aldolase activity toward beta-hydroxyamino acids, producing glycine and aldehydes, via a retro-aldol mechanism. In Streptococcus thermophilus (strain CNRZ 1066), this protein is Serine hydroxymethyltransferase.